The chain runs to 93 residues: Integration host factor subunit beta (93 aa).

It belongs to the bacterial histone-like protein family. Heterodimer of an alpha and a beta chain.

Functionally, this protein is one of the two subunits of integration host factor, a specific DNA-binding protein that functions in genetic recombination as well as in transcriptional and translational control. The protein is Integration host factor subunit beta of Haemophilus ducreyi (strain 35000HP / ATCC 700724).